Here is a 428-residue protein sequence, read N- to C-terminus: Tryptophan synthase beta chain (428 aa).

Position 100 is an N6-(pyridoxal phosphate)lysine (Lys100).

It belongs to the TrpB family. In terms of assembly, tetramer of two alpha and two beta chains. The cofactor is pyridoxal 5'-phosphate.

The enzyme catalyses (1S,2R)-1-C-(indol-3-yl)glycerol 3-phosphate + L-serine = D-glyceraldehyde 3-phosphate + L-tryptophan + H2O. Its pathway is amino-acid biosynthesis; L-tryptophan biosynthesis; L-tryptophan from chorismate: step 5/5. In terms of biological role, the beta subunit is responsible for the synthesis of L-tryptophan from indole and L-serine. This is Tryptophan synthase beta chain from Streptomyces griseus subsp. griseus (strain JCM 4626 / CBS 651.72 / NBRC 13350 / KCC S-0626 / ISP 5235).